Reading from the N-terminus, the 249-residue chain is Probable transcriptional regulatory protein GOX1679 (249 aa).

Belongs to the TACO1 family.

It localises to the cytoplasm. This Gluconobacter oxydans (strain 621H) (Gluconobacter suboxydans) protein is Probable transcriptional regulatory protein GOX1679.